Consider the following 650-residue polypeptide: Epithelial sodium channel subunit gamma (650 aa).

Over 1-55 (MAPGEKIKAKIKKNLPVRGPQAPTIKDLMHWYCMNTNTHGCRRIVVSRGRLRRLL) the chain is Cytoplasmic. The helical transmembrane segment at 56–76 (WIAFTLTAVALIIWQCALLVF) threads the bilayer. Residues 77 to 542 (SFYTVSVSIK…GGQLGLWMSC (466 aa)) are Extracellular-facing. 8 cysteine pairs are disulfide-bonded: C100–C284, C208–C215, C261–C268, C373–C458, C395–C454, C399–C450, C408–C435, and C410–C424. A gating release of inhibition by proteolysis (GRIP); protease-sensitive region that is responsible for the proteolytic activation of the channel region spans residues 135–222 (RKRREAGSMP…SDCATYTFSS (88 aa)). The N-linked (GlcNAc...) asparagine glycan is linked to N210. N-linked (GlcNAc...) asparagine glycosylation is present at N272. N498 carries N-linked (GlcNAc...) asparagine glycosylation. A helical transmembrane segment spans residues 543-563 (SVVCVIEIIEVFFIDFFSIIA). Residues 564 to 650 (RRQWHKAKDW…LTDTQLTNEL (87 aa)) are Cytoplasmic-facing. The tract at residues 577 to 628 (RQTPPSTETPSSRQGQDNPALDTDDDLPTFTSAMRLPPAPGSTVPGTPPPRY) is disordered. Over residues 579 to 593 (TPPSTETPSSRQGQD) the composition is skewed to polar residues. Residues 624–628 (PPPRY) carry the PY motif; mediates interaction, ubiquitination and inhibition by NEDD4 and NEDD4L motif. The PY motif; recruits WW domain-containing proteins and is thereby required for ubiquitination and inhibition of the channel by NEDD4 and NEDD4L motif lies at 624 to 628 (PPPRY).

It belongs to the amiloride-sensitive sodium channel (TC 1.A.6) family. SCNN1G subfamily. In terms of assembly, component of the heterotrimeric epithelial sodium channel (ENaC) composed of an alpha/SCNN1A, a beta/SCNN1B and a gamma/SCNN1G subunit. Interacts with WWP1 (via WW domains). Interacts with WWP2 (via WW domains); inhibits the channel. Interacts with the full-length immature form of PCSK9 (pro-PCSK9); inhibits ENaC by promoting its proteasomal degradation. Interacts with BPIFA1; the interaction is indirect via SCNN1B and inhibits the proteolytic maturation of SCNN1A and SCNN1G and the activation of ENaC. Phosphorylated on serine and threonine residues. Aldosterone and insulin increase the basal level of phosphorylation. In terms of processing, ubiquitinated. Can be ubiquitinated at multiple sites and undergo monoubiquitination and polyubiquitination. Ubiquitination by NEDD4 or NEDD4L inhibits the ENaC channel through endocytosis, intracellular retention and degradation of its individual subunits. Post-translationally, ENaC is activated through the proteolytic maturation of its subunits. Furin cleaves the SCNN1G subunit first, followed by cleavage by prostasin (PRSS8), which results in a stepwise increase in the open probability of the channel due to the release of an inhibitory tract. BPIFA1, which is recruited by the SCNN1B subunit, prevents the proteolytic activation of ENaC. N-glycosylated. N-linked glycans are processed to complex type during ENaC complex assembly and transport to the plasma membrane.

The protein localises to the apical cell membrane. The enzyme catalyses Na(+)(in) = Na(+)(out). Originally identified and characterized by its inhibition by the diuretic drug amiloride. In terms of biological role, this is one of the three pore-forming subunits of the heterotrimeric epithelial sodium channel (ENaC), a critical regulator of sodium balance and fluid homeostasis. ENaC operates in epithelial tissues, where it mediates the electrodiffusion of sodium ions from extracellular fluid through the apical membrane of cells, with water following osmotically. It plays a key role in maintaining sodium homeostasis through electrogenic sodium reabsorption in the kidneys. Additionally, ENaC is essential for airway surface liquid homeostasis, which is crucial for proper mucus clearance. This chain is Epithelial sodium channel subunit gamma, found in Rattus norvegicus (Rat).